The following is a 1198-amino-acid chain: Spindle-defective protein 5 (1198 aa).

Over residues 1 to 10 (MEDNSVLNED) the composition is skewed to polar residues. The segment at 1–45 (MEDNSVLNEDSNLEHVEGQPRRSMSQPVLNVEGDKRTSSTSATQQ) is disordered. Coiled-coil stretches lie at residues 67–381 (EENK…QLTG), 566–603 (HDVAVNVEQMQEKMSQIREALARLFERLKSSAALFEEI), 694–916 (KFTS…LSTS), 983–1035 (DELC…ENVP), and 1127–1175 (KNET…EFQD).

The protein resides in the cytoplasm. The protein localises to the cytoskeleton. Its subcellular location is the microtubule organizing center. It localises to the centrosome. In terms of biological role, plays a central role in centrosome maturation and mitotic spindle assembly during the first division of the zygote. Required for the centrosomal localization of air-1 and zyg-9. Probably not required in late embryogenesis and during larval development. The chain is Spindle-defective protein 5 (spd-5) from Caenorhabditis elegans.